The sequence spans 162 residues: Early E1A 18 kDa protein (162 aa).

The disordered stretch occupies residues 134 to 162; it reads EEPTEGVAENSLKRQADSSLCSSSPKRFC. Over residues 150-162 the composition is skewed to polar residues; sequence DSSLCSSSPKRFC.

The polypeptide is Early E1A 18 kDa protein (Tree shrew adenovirus serotype 1 (TSAdV-1)).